A 340-amino-acid polypeptide reads, in one-letter code: Probable dual-specificity RNA methyltransferase RlmN (340 aa).

The Proton acceptor role is filled by Glu-90. Residues Gln-97–Asn-325 form the Radical SAM core domain. An intrachain disulfide couples Cys-104 to Cys-331. Residues Cys-111, Cys-115, and Cys-118 each coordinate [4Fe-4S] cluster. S-adenosyl-L-methionine-binding positions include Gly-157–Glu-158, Ser-189, Ser-212–Thr-214, and Asn-288. The active-site S-methylcysteine intermediate is Cys-331.

Belongs to the radical SAM superfamily. RlmN family. [4Fe-4S] cluster serves as cofactor.

The protein localises to the cytoplasm. It catalyses the reaction adenosine(2503) in 23S rRNA + 2 reduced [2Fe-2S]-[ferredoxin] + 2 S-adenosyl-L-methionine = 2-methyladenosine(2503) in 23S rRNA + 5'-deoxyadenosine + L-methionine + 2 oxidized [2Fe-2S]-[ferredoxin] + S-adenosyl-L-homocysteine. It carries out the reaction adenosine(37) in tRNA + 2 reduced [2Fe-2S]-[ferredoxin] + 2 S-adenosyl-L-methionine = 2-methyladenosine(37) in tRNA + 5'-deoxyadenosine + L-methionine + 2 oxidized [2Fe-2S]-[ferredoxin] + S-adenosyl-L-homocysteine. Its function is as follows. Specifically methylates position 2 of adenine 2503 in 23S rRNA and position 2 of adenine 37 in tRNAs. This Treponema pallidum (strain Nichols) protein is Probable dual-specificity RNA methyltransferase RlmN.